Here is a 657-residue protein sequence, read N- to C-terminus: Pyoverdine export ATP-binding/permease protein PvdT (657 aa).

In terms of domain architecture, ABC transporter spans 6–245 (IDLQDIRKSY…ASTNPGALQA (240 aa)). An ATP-binding site is contributed by 43 to 50 (GASGSGKS). The next 4 membrane-spanning stretches (helical) occupy residues 285 to 305 (ALTL…LAVG), 539 to 559 (IAAI…LMTV), 590 to 610 (LSVV…GVLI), and 620 to 640 (LVAI…FGFM).

It belongs to the ABC transporter superfamily. Macrolide exporter (TC 3.A.1.122) family. As to quaternary structure, part of the tripartite efflux system PvdRT-OpmQ, which is composed of an inner membrane component with both ATPase and permease domains, PvdT, a periplasmic membrane fusion protein, PvdR, and an outer membrane component, OpmQ.

Its subcellular location is the cell inner membrane. Its function is as follows. Part of the tripartite efflux system PvdRT-OpmQ required for the secretion into the extracellular milieu of the siderophore pyoverdine (PVD), which is involved in iron acquisition. This subunit binds PVD and drives its secretion by hydrolyzing ATP. The system is responsible for export of newly synthesized PVD after the final steps of biosynthesis have taken place in the periplasm. It is also responsible for recycling of PVD after internalization of ferri-PVD into the periplasm by the outer-membrane receptor FpvA and release of iron from PVD, thus making PVD available for new cycles of iron uptake. This chain is Pyoverdine export ATP-binding/permease protein PvdT, found in Pseudomonas fluorescens (strain Pf0-1).